A 126-amino-acid chain; its full sequence is MAIREYLWVSLGGIVGACARYFLSRFTAKITGTSFPWGTLLINITGSFVLGLFLVYTTERVFVDPKWRLLIAIGFCGAYTTFSSYAYESMVYFQQGNWGLFAGNVLANNILCLAAVLGAGALVRSI.

The next 4 helical transmembrane spans lie at 7 to 24, 35 to 55, 69 to 89, and 98 to 118; these read LWVS…YFLS, FPWG…LFLV, LLIA…AYES, and WGLF…AVLG. 2 residues coordinate Na(+): Gly77 and Thr80.

The protein belongs to the fluoride channel Fluc/FEX (TC 1.A.43) family.

The protein resides in the cell inner membrane. The catalysed reaction is fluoride(in) = fluoride(out). Na(+) is not transported, but it plays an essential structural role and its presence is essential for fluoride channel function. Functionally, fluoride-specific ion channel. Important for reducing fluoride concentration in the cell, thus reducing its toxicity. In Koribacter versatilis (strain Ellin345), this protein is Fluoride-specific ion channel FluC.